The following is a 102-amino-acid chain: Protein RnfH (102 aa).

Belongs to the UPF0125 (RnfH) family.

This chain is Protein RnfH, found in Pseudomonas entomophila (strain L48).